Here is a 1966-residue protein sequence, read N- to C-terminus: MTAKRVDMAAPDNLLFLDSDAVNSSPASVPIEQNEPTHVLDNQTDDSLRSMPDPHTNTALESTGLMPVPCQDETLETHSQHNEGENESSLVSTQHMDHTRLTEMTINDEKSNNWDFDISGVKENDNSTNLNPDLIHHAGTDSVMERNLNDKQTDLNHKDETFGSLMSSEVLLLKENRQQEMSQDTNLHQCSSSESTGIEYSQTANDAISDAMNSEQSPDQPFSIASNDTDKTTSECSVQTCWDTVESAATSKTQPELHDDVKDVMCESFTTSQTLNIDYLSTDISVCLADLPETDSLNILTPASTLLGILGKNNNVLKTADVPINDSEMVQSINKDLASPNADISKTVFTQMDQNLLHVTDHNVKVLESNRADTVVDQYVFSENIGQEVSQASSHDEDLNSSVQSHDQQLSTANSEIEETSSEFHTQTCQDIHEGVIIAEEAMNGHNTLPEMHDIADVTTSQTPIMKDPMIDEPSYLPDLHKADTPNVITTASTLSDTLETDDSIFETADVSVSDCELIQTVTLKTVTTYETLLMMHDVGEDLTCCDFTTSAIEEPETSHPLSLDDLHESNTPNIPPHASALLDSLGMNKNFLETADVPVSDCEVIQTVTFETVTTYETFPVMHDIAEDLTCCDFTTSETPKIEEPETSHSLSLDDLNEANTPNILPHASALLESLGMNNNFLEAADMPVSDREIIHPVNKDLDSSSVEICTVVLTQTDPKEVQDSDLDEKETESNRIDDSIDGMIDTKFSLDVSKLQPVCSNDLSGTVIHSESLFSQSIPDTPQIGEKYKNDLLQVISPPTPVTNEDLGNCSEEIDDACLKFTGTERDVEGDSELWLEPSQFLAGEEDEGAIFDKWGRSCSSSPPTTHPDNTKASDYTWRENISIDHNAEDWELTFPPVERWSSSDSWASALSDWFQAVNTYPEDSFKSASTGSKLGMAIQDNILEQRTSSDNANNDEQTCLSLNLMQPDEPGQALERGLVKSDNTNGTVFKQGDKERLASCLDMDKDTTTMESQMSLLETSTPESHKADNNAVMETFNASLTHEFNAKLHGSLDISGKLLSAKREGNVLVEVTGGKVSQLGLVFEEERQSIFTSPSSSAYTRDKNLTGCVSNEERCHSSDVHLCICPSQSDSHVSSKAGHAEGNGSFLHSNIGNCTVKPYVEENIPQFIMPFAPICTGNTFLHRSFLKEDRSQADLDLPDKKIINKINLKSNKKSSSSDDSSEDNFHTCPDQSLSSSSGDSDDPSITDSGRKPAYSDTCDIGKELSKLLLLTGEHFMVSEDKRIAYVTLDLDESQHFGRFSLPNCEKQSKPDNMPHKTSKTSSDGKMRSKHKEKPDDKQQHGIQASKKQDPQPQSQVKNEGAGCEDCPVAVIETIVITEKIIPKTQGKKKKKHVQHGTPKPENDAPTDVRSESRQKNVNGKAENLELKVASNSLNKPVAQPSGKTDITKKDSAQKVMSVRPKVEPSMAKMDPAGVNATQKSSPIKLKADTFNTAKMENKTCTTDSLSTCLPSMLNDDIKRRRIADDLSRAVPIRTRPQLPAIFRQARKDGEDVTRRAYSEVVKQKNSTPKEVVVPRVVSEIQADPVPADPQNISLWCQFSPIPPEATIKWTKEAAVLSEINKVEKEDGRFTLTIIKACSKDLGFYKCSLIVANISVSTSEYHLTSEVLMELVIPSHDQPAEPRVMEGDEENIQCSPLLFKEDFLSDQYFGKNQPASILTEKVHFGEGMHRKAFRTTLTEGNLPRFRPGHPCVLKVHNSISYGTKNNEELVQKNYSLAVEECHVQNTAREYIKAYNSVAKSAESFGDLPEIIPIYLVHRPSNDIPYATLEEELLGDFVKYSVKDGKEINLMRRDSEAGQKCCAFQHWVYTQTEGNLLVTDMQGVGMKLTDVGIATCKKGYKGFRGNCATSFIDQFKALHQCNRYCELLGLVSLQPKPKRTVAPPKPKTQPVPKKKTFGPVLNAKS.

6 disordered regions span residues 23–65 (NSSP…STGL), 211–231 (AMNSEQSPDQPFSIASNDTDK), 1211–1259 (LKSN…AYSD), 1303–1365 (SLPN…EGAG), 1386–1423 (KTQGKKKKKHVQHGTPKPENDAPTDVRSESRQKNVNGK), and 1437–1463 (NKPVAQPSGKTDITKKDSAQKVMSVRP). The span at 211 to 227 (AMNSEQSPDQPFSIASN) shows a compositional bias: polar residues. Residues 1211–1221 (LKSNKKSSSSD) show a composition bias toward low complexity. The span at 1325 to 1342 (SDGKMRSKHKEKPDDKQQ) shows a compositional bias: basic and acidic residues. Basic residues predominate over residues 1388-1397 (QGKKKKKHVQ). Residues 1401-1417 (PKPENDAPTDVRSESRQ) are compositionally biased toward basic and acidic residues. In terms of domain architecture, Ig-like spans 1577–1659 (PRVVSEIQAD…SLIVANISVS (83 aa)). Cysteine 1599 and cysteine 1649 form a disulfide bridge. The region spanning 1702–1934 (KEDFLSDQYF…YCELLGLVSL (233 aa)) is the Alpha-type protein kinase domain. A disordered region spans residues 1937–1966 (KPKRTVAPPKPKTQPVPKKKTFGPVLNAKS).

This sequence belongs to the protein kinase superfamily. Alpha-type protein kinase family. ALPK subfamily. Expressed in developing cardiac tissue.

It localises to the basolateral cell membrane. The enzyme catalyses L-seryl-[protein] + ATP = O-phospho-L-seryl-[protein] + ADP + H(+). The catalysed reaction is L-threonyl-[protein] + ATP = O-phospho-L-threonyl-[protein] + ADP + H(+). In terms of biological role, protein kinase that recognizes phosphorylation sites in which the surrounding peptides have an alpha-helical conformation. Regulates cardiac development and cardiomyocyte differentiation by negatively regulating Wnt/beta-catenin signaling. The polypeptide is Alpha-protein kinase 2 (alpk2) (Danio rerio (Zebrafish)).